Here is a 141-residue protein sequence, read N- to C-terminus: MAKKVVGFIKLQIPAGGANPAPPVGPALGQKGVNIMEFCKQFNAKTQSQAGTIIPVVITVFSDKSFTFITKTPPAAVLLIKEAGLQKGSGEPNKNKVGTVSKEQVRKIAELKMPDLNAVDVEGAMQMVMGTARSMGIVVED.

This sequence belongs to the universal ribosomal protein uL11 family. In terms of assembly, part of the ribosomal stalk of the 50S ribosomal subunit. Interacts with L10 and the large rRNA to form the base of the stalk. L10 forms an elongated spine to which L12 dimers bind in a sequential fashion forming a multimeric L10(L12)X complex. Post-translationally, one or more lysine residues are methylated.

In terms of biological role, forms part of the ribosomal stalk which helps the ribosome interact with GTP-bound translation factors. In Prosthecochloris aestuarii (strain DSM 271 / SK 413), this protein is Large ribosomal subunit protein uL11.